The following is a 187-amino-acid chain: Cytochrome b-245 chaperone 1 (187 aa).

A helical membrane pass occupies residues 20-42 (GIRSWSLLVGILSIGLAAAYYSG). Residue serine 168 is modified to Phosphoserine.

It belongs to the CYBC1 family. Interacts with CYBB; CYBC1 may act as a chaperone stabilizing Cytochrome b-245 heterodimer.

The protein resides in the endoplasmic reticulum membrane. Functions as a chaperone necessary for a stable expression of the CYBA and CYBB subunits of the cytochrome b-245 heterodimer. Controls the phagocyte respiratory burst and is essential for innate immunity. In Bos taurus (Bovine), this protein is Cytochrome b-245 chaperone 1.